The following is a 115-amino-acid chain: Cysteine-rich venom protein 5 (115 aa).

Residues 1–22 (MSKVMIIMLVGMIFAIISTVSG) form the signal peptide. 3 disulfide bridges follow: C26/C41, C33/C44, and C40/C51. A disordered region spans residues 54 to 115 (RIGPPINTQP…RKPTNRPRSH (62 aa)). 2 stretches are compositionally biased toward basic residues: residues 68 to 77 (QPTRRTRGPK) and 86 to 115 (NRTR…PRSH).

Expressed by the venom gland.

It is found in the secreted. This chain is Cysteine-rich venom protein 5, found in Pimpla hypochondriaca (Parasitoid wasp).